Consider the following 379-residue polypeptide: Sensor histidine kinase YhcY (379 aa).

In terms of domain architecture, Histidine kinase spans 185-373; that stretch reads RLAQELHDSV…KLSIRLPLKS (189 aa). His-191 bears the Phosphohistidine; by autocatalysis mark.

The enzyme catalyses ATP + protein L-histidine = ADP + protein N-phospho-L-histidine.. Its function is as follows. Member of the two-component regulatory system YhcY/YhcZ. Probably activates YhcZ by phosphorylation. This chain is Sensor histidine kinase YhcY (yhcY), found in Bacillus subtilis (strain 168).